The chain runs to 99 residues: Ferredoxin, heterocyst (99 aa).

The 2Fe-2S ferredoxin-type domain maps to 4 to 96 (YQVRLINKKE…NCTIKTHQEP (93 aa)). [2Fe-2S] cluster contacts are provided by cysteine 42, cysteine 47, cysteine 50, and cysteine 80.

This sequence belongs to the 2Fe2S plant-type ferredoxin family. The cofactor is [2Fe-2S] cluster.

Ferredoxins are iron-sulfur proteins that transfer electrons in a wide variety of metabolic reactions. This Microchaete diplosiphon (Fremyella diplosiphon) protein is Ferredoxin, heterocyst (fdxH).